The chain runs to 314 residues: Methionyl-tRNA formyltransferase (314 aa).

111–114 serves as a coordination point for (6S)-5,6,7,8-tetrahydrofolate; it reads SLLP.

The protein belongs to the Fmt family.

The enzyme catalyses L-methionyl-tRNA(fMet) + (6R)-10-formyltetrahydrofolate = N-formyl-L-methionyl-tRNA(fMet) + (6S)-5,6,7,8-tetrahydrofolate + H(+). Its function is as follows. Attaches a formyl group to the free amino group of methionyl-tRNA(fMet). The formyl group appears to play a dual role in the initiator identity of N-formylmethionyl-tRNA by promoting its recognition by IF2 and preventing the misappropriation of this tRNA by the elongation apparatus. This Coxiella burnetii (strain CbuG_Q212) (Coxiella burnetii (strain Q212)) protein is Methionyl-tRNA formyltransferase.